The sequence spans 187 residues: Orotate phosphoribosyltransferase (187 aa).

5-phospho-alpha-D-ribose 1-diphosphate-binding positions include arginine 98, lysine 99, lysine 102, histidine 104, and 128–136 (EDVTTTGGS). Orotate is bound by residues threonine 132 and arginine 160.

The protein belongs to the purine/pyrimidine phosphoribosyltransferase family. PyrE subfamily. Homodimer. The cofactor is Mg(2+).

It catalyses the reaction orotidine 5'-phosphate + diphosphate = orotate + 5-phospho-alpha-D-ribose 1-diphosphate. Its pathway is pyrimidine metabolism; UMP biosynthesis via de novo pathway; UMP from orotate: step 1/2. Its function is as follows. Catalyzes the transfer of a ribosyl phosphate group from 5-phosphoribose 1-diphosphate to orotate, leading to the formation of orotidine monophosphate (OMP). The polypeptide is Orotate phosphoribosyltransferase (Rhodopseudomonas palustris (strain BisB5)).